The sequence spans 392 residues: MTLADRWLLPEGVDEALPEQAAKIEHLRRTLLNLHESWGYHLVIPPLLEYLDSLLTGAGSDLEIETFKVIDQLSGRLLGIRADFTSQVARIDAHCLKDDGVQRLSYCGSVLRTMPAGLDGTRSPIQLGAEIYGHGGVESDVEVLSLMLQTLSTAGLSNLVLDLGHVDIVSGVLAACNLNADQESKLIELYKAKDLPELDRYAEELGCLTDIQKQWLVGLPRLCGGKEVLKHATDLLGDVNESIRDAIVLLQKVSDSICQRFPKVGLHFDLSDLVSYSYHTGVIFAAYVPGHGNAIARGGRYNNIGQVFGRSRPATGFSTDVKALVALTDIVVNKPKTVLSPICSSDELWQKANSLRAEGYRVVEVLDDICAGDADFKLEFVDEAWQLMPVHN.

This sequence belongs to the class-II aminoacyl-tRNA synthetase family. HisZ subfamily. Heteromultimer composed of HisG and HisZ subunits.

It is found in the cytoplasm. Its pathway is amino-acid biosynthesis; L-histidine biosynthesis; L-histidine from 5-phospho-alpha-D-ribose 1-diphosphate: step 1/9. Required for the first step of histidine biosynthesis. May allow the feedback regulation of ATP phosphoribosyltransferase activity by histidine. The sequence is that of ATP phosphoribosyltransferase regulatory subunit from Marinomonas sp. (strain MWYL1).